The following is a 423-amino-acid chain: MNSQQNKLPQQPQQPPSSIVDDDNWKSQLKLPPRDERRQTEDVTATEGNDFDDLHLKRDLLRGIFEKGYVKPSPIQEKAIPIALAGRDIMARAKNGTGKTASFLIPALEKTDPTKDVIQVLILVPTRELALQTSQVCKELGKYMNVQVMASTGGTSLKDDIMRLYNPVHILVATPGRVLDLAQKNVANLSNCHTMIMDEADKLLSQEFQPLVEQLINFLPQQRQILLFSATFPVTVKSFKEHYLQQAFEINLMEELTLKGVTQYYAFVEERQKIHCLNTLFSKLQINQSIIFCNSVNRVELLAKKITELGYSCFFIHAKMVQAHRNRVFHDFRNGACRNLVSSDLFTRGIDIQDVNVVINFDFPKHSETYLHRIGRSGRFGHLGLAINLITYEDRFSLYKIEQELGTEIKPIPPVIDKSLYAA.

The interval Met1–Thr46 is disordered. The span at Pro32–Glu41 shows a compositional bias: basic and acidic residues. Residues Asn49–Glu77 carry the Q motif motif. The region spanning Ile80–Ile250 is the Helicase ATP-binding domain. Ala93–Thr100 contacts ATP. The DEAD box signature appears at Asp198–Asp201. In terms of domain architecture, Helicase C-terminal spans Gly260–Leu420.

The protein belongs to the DEAD box helicase family. DDX6/DHH1 subfamily.

The protein resides in the cytoplasm. Its subcellular location is the P-body. It localises to the nucleus. The catalysed reaction is ATP + H2O = ADP + phosphate + H(+). Functionally, ATP-dependent RNA helicase which may be involved in mRNA turnover. This chain is Probable ATP-dependent RNA helicase ddx6 (ddx6), found in Dictyostelium discoideum (Social amoeba).